The following is a 1584-amino-acid chain: Kinesin-like protein unc-104 (1584 aa).

The Kinesin motor domain occupies 3–347 (SVKVAVRVRP…LRYADRAKQI (345 aa)). Position 93–100 (93–100 (GQTGSGKS)) interacts with ATP. The tract at residues 183 to 335 (VCSYHDICNL…PADINFDETL (153 aa)) is microtubule-binding. 3 coiled-coil regions span residues 425–445 (EQKL…LRDM), 598–652 (IDLK…SYIS), and 777–797 (SIEK…TDAE). Residues 1366-1416 (IPMNKDPPTGNKAQELSDESGSNSITSPVSDKSLIKSSRSSDLLCRQKSKS) are disordered. Positions 1376-1394 (NKAQELSDESGSNSITSPV) are enriched in polar residues. Residues 1395–1409 (SDKSLIKSSRSSDLL) are compositionally biased toward low complexity. One can recognise a PH domain in the interval 1460 to 1558 (VVSKKGYMNF…WLYAINPLMA (99 aa)).

The protein belongs to the TRAFAC class myosin-kinesin ATPase superfamily. Kinesin family. Unc-104 subfamily. In terms of assembly, interacts with casy-1. In terms of tissue distribution, expressed in nerve ring, amphid commissure and ventral nerve cord (at protein level).

The protein localises to the cytoplasm. Its subcellular location is the cytoskeleton. It is found in the cell projection. It localises to the axon. In terms of biological role, motor protein involved in microtubule-associated anterograde transport. Regulates the transport of synaptic vesicle precursors in the axon of DA motor neurons. Regulates the polarized sorting of axonal proteins. Essential for the transport of synaptic components during the synaptic remodeling of the DD motor neuron, probably downstream of cdk-5 and/or pct-1/cyy-1 complex. Required for the anterograde transport of neuropeptide-containing dense core vesicles along axons. Involved in necrotic cell death. This is Kinesin-like protein unc-104 (unc-104) from Caenorhabditis elegans.